The following is a 366-amino-acid chain: Chorismate synthase (366 aa).

Residues Arg48 and Arg54 each contribute to the NADP(+) site. FMN-binding positions include 131–133 (RAS), 243–244 (NA), Gly288, 303–307 (KPTPS), and Arg329.

This sequence belongs to the chorismate synthase family. In terms of assembly, homotetramer. It depends on FMNH2 as a cofactor.

It catalyses the reaction 5-O-(1-carboxyvinyl)-3-phosphoshikimate = chorismate + phosphate. It functions in the pathway metabolic intermediate biosynthesis; chorismate biosynthesis; chorismate from D-erythrose 4-phosphate and phosphoenolpyruvate: step 7/7. Catalyzes the anti-1,4-elimination of the C-3 phosphate and the C-6 proR hydrogen from 5-enolpyruvylshikimate-3-phosphate (EPSP) to yield chorismate, which is the branch point compound that serves as the starting substrate for the three terminal pathways of aromatic amino acid biosynthesis. This reaction introduces a second double bond into the aromatic ring system. The sequence is that of Chorismate synthase from Bartonella quintana (strain Toulouse) (Rochalimaea quintana).